Consider the following 318-residue polypeptide: Potassium channel subfamily K member 15 (318 aa).

The Cytoplasmic segment spans residues Met1–Thr8. The helical transmembrane segment at Ala9–Leu29 threads the bilayer. The pore-forming intramembrane region spans Phe80–Pro101. Residues Val108–Leu128 traverse the membrane as a helical segment. At Gly129–Asn158 the chain is on the cytoplasmic side. The chain crosses the membrane as a helical span at residues Met159–Ala179. Residues Ala189–Gln209 constitute an intramembrane region (pore-forming). A helical membrane pass occupies residues Phe223–Val243. Over Leu244 to Ile318 the chain is Cytoplasmic. The segment at Leu296–Ile318 is disordered. Over residues Ala300–Leu311 the composition is skewed to basic and acidic residues.

Belongs to the two pore domain potassium channel (TC 1.A.1.8) family. As to quaternary structure, heterodimer. Post-translationally, phosphorylated. Brain-specific. Highly expressed in auditory nuclei, in Purkinje cells and in olfactory bulb mitral cells.

It localises to the membrane. In terms of biological role, probable potassium channel subunit. No channel activity observed in heterologous systems. May need to associate with another protein to form a functional channel. This chain is Potassium channel subfamily K member 15 (Kcnk15), found in Rattus norvegicus (Rat).